The chain runs to 508 residues: Phenylalanine--tRNA ligase alpha subunit (508 aa).

A2 is modified (N-acetylalanine). The residue at position 190 (T190) is a Phosphothreonine. Phosphoserine is present on residues S193 and S301. K311 is modified (N6-acetyllysine). Residues T329, 372–374 (QIE), and Y412 contribute to the L-phenylalanine site. E414 provides a ligand contact to Mg(2+). Residue F438 participates in L-phenylalanine binding.

This sequence belongs to the class-II aminoacyl-tRNA synthetase family. Phe-tRNA synthetase alpha subunit type 2 subfamily. As to quaternary structure, heterotetramer; dimer of two heterodimers formed by FARSA and FARSB. The cofactor is Mg(2+).

It localises to the cytoplasm. It carries out the reaction tRNA(Phe) + L-phenylalanine + ATP = L-phenylalanyl-tRNA(Phe) + AMP + diphosphate + H(+). The protein is Phenylalanine--tRNA ligase alpha subunit (FARSA) of Pongo abelii (Sumatran orangutan).